The following is a 471-amino-acid chain: Putative multidrug resistance protein MdtD (471 aa).

The Periplasmic portion of the chain corresponds to 1 to 11 (MTDLPDSTRWQ). A helical transmembrane segment spans residues 12–32 (LWIVAFGFFMQSLDTTIVNTA). At 33–48 (LPSMAQSLGESPLHMH) the chain is on the cytoplasmic side. Residues 49 to 69 (MVIVSYVLTVAVMLPASGWLA) form a helical membrane-spanning segment. At 70–76 (DKVGVRN) the chain is on the periplasmic side. Residues 77-97 (IFFTAIVLFTLGSLFCALSGT) form a helical membrane-spanning segment. Over 98 to 101 (LNEL) the chain is Cytoplasmic. The helical transmembrane segment at 102-124 (LLARALQGVGGAMMVPVGRLTVM) threads the bilayer. Over 125–137 (KIVPREQYMAAMT) the chain is Periplasmic. Residues 138–158 (FVTLPGQVGPLLGPALGGLLV) form a helical membrane-spanning segment. Residues 159-164 (EYASWH) lie on the Cytoplasmic side of the membrane. A helical transmembrane segment spans residues 165–185 (WIFLINIPVGIIGAIATLMLM). Residues 186–196 (PNYTMQTRRFD) are Periplasmic-facing. A helical membrane pass occupies residues 197–217 (LSGFLLLAVGMAVLTLALDGS). Residues 218 to 224 (KGTGLSP) lie on the Cytoplasmic side of the membrane. Residues 225-245 (LTIAGLVAVGVVALVLYLLHA) traverse the membrane as a helical segment. Topologically, residues 246–262 (RNNNRALFSLKLFRTRT) are periplasmic. The chain crosses the membrane as a helical span at residues 263–283 (FSLGLAGSFAGRIGSGMLPFM). Over 284-285 (TP) the chain is Cytoplasmic. The chain crosses the membrane as a helical span at residues 286-306 (VFLQIGLGFSPFHAGLMMIPM). The Periplasmic segment spans residues 307 to 341 (VLGSMGMKRIVVQVVNCFGYRRVLVATTLGLSLVT). A helical transmembrane segment spans residues 342 to 362 (LLFMTTALLGWYYVLPFVLFL). Residues 363–395 (QGMVNSTRFSSMNTLTLKDLPDNLASSGNSLLS) are Cytoplasmic-facing. Residues 396–416 (MIMQLSMSIGVTIAGLLLGLF) form a helical membrane-spanning segment. At 417–430 (GSQHVSVDSGTTQT) the chain is on the periplasmic side. A helical membrane pass occupies residues 431–451 (VFMYTWLSMALIIALPAFIFA). At 452–471 (RVPNDTHQNVAISRRKRSAQ) the chain is on the cytoplasmic side.

It belongs to the major facilitator superfamily. TCR/Tet family.

It localises to the cell inner membrane. The polypeptide is Putative multidrug resistance protein MdtD (Escherichia coli O139:H28 (strain E24377A / ETEC)).